A 387-amino-acid chain; its full sequence is Methylthioribose-1-phosphate isomerase (387 aa).

Asp-257 serves as the catalytic Proton donor.

This sequence belongs to the eIF-2B alpha/beta/delta subunits family. MtnA subfamily.

It localises to the cytoplasm. It is found in the nucleus. It carries out the reaction 5-(methylsulfanyl)-alpha-D-ribose 1-phosphate = 5-(methylsulfanyl)-D-ribulose 1-phosphate. It participates in amino-acid biosynthesis; L-methionine biosynthesis via salvage pathway; L-methionine from S-methyl-5-thio-alpha-D-ribose 1-phosphate: step 1/6. Functionally, catalyzes the interconversion of methylthioribose-1-phosphate (MTR-1-P) into methylthioribulose-1-phosphate (MTRu-1-P). The chain is Methylthioribose-1-phosphate isomerase (mri1) from Aspergillus fumigatus (strain CBS 144.89 / FGSC A1163 / CEA10) (Neosartorya fumigata).